A 572-amino-acid chain; its full sequence is MDARTWRLGWRCLLLLALLGSTRSEGVESCEEVRKLFQWRLGGAVKGLPEAPRAGPDLQVCLSKNPTCCTRKMEERYQIAARQDLQQVLQTSSSTLKLLISRNAAAFQETLETLIRQAENYTSILFCNTYRNMALEAAASIQEFFTDVGLYLFGADVNPEEFVNRFFDSLFPLVYNHLINPGVTDSSLQYSECIRMARQDVSPFGNIPKRVMGQMGRSLLPGRTFLQALNLGIEVINTTDHIHFSKECSRALLKMQYCPHCQSLMLSKPCMGYCLNVIRGCLAHMTELNPHWHAYIRSLEELSDAMHGTYDVEHVLLNFHLLVNDAVLQAHLNGQKLLDQVNTICGHPVRTPTQSPRCTFDPSKEKHGMKISARNGEETLANRRKEFINSLRLHGSFYGGLADQLCVNELAAPEGRPCWNGEEIVKSYAQRVVGNGIKAQSANPEVRVRGTDPVVNQIIDKLKHVIQLLRGRSPKPNKWELLQPGSGGGMLENSSGDCDDEDGCGGSGSGEVKRTLKITNWMPDSMNFSDVKQVHRADHGSTLDTTSTGCASGTESMALPLMGTLMFLPWLW.

The first 24 residues, 1-24 (MDARTWRLGWRCLLLLALLGSTRS), serve as a signal peptide directing secretion. Residues N120 and N237 are each glycosylated (N-linked (GlcNAc...) asparagine). S486 is a glycosylation site (O-linked (Xyl...) (glycosaminoglycan) serine). N-linked (GlcNAc...) asparagine glycosylation occurs at N493. 3 O-linked (Xyl...) (glycosaminoglycan) serine glycosylation sites follow: S495, S507, and S509. N527 carries an N-linked (GlcNAc...) asparagine glycan.

It belongs to the glypican family.

It is found in the cell membrane. Its subcellular location is the secreted. The protein localises to the extracellular space. Its function is as follows. Cell surface proteoglycan that bears heparan sulfate. The polypeptide is Glypican-5 (Gpc5) (Mus musculus (Mouse)).